An 87-amino-acid polypeptide reads, in one-letter code: Venom serine protease inhibitor (87 aa).

Residues Met-1–Ala-23 form the signal peptide. Disulfide bonds link Cys-27/Cys-61, Cys-36/Cys-57, Cys-40/Cys-53, Cys-44/Cys-81, and Cys-63/Cys-75. The region spanning Cys-27–Cys-81 is the TIL domain.

This sequence belongs to the serine protease inhibitor-like (TIL domain-containing) family. Specifically expressed by the venom gland.

It localises to the secreted. In terms of biological role, antifibrinolytic and antimicrobial serine protease inhibitor. Inhibits trypsin, plasmin and microbial serine proteases but not chymotrypsin, thrombin and elastase. Inhibits the plasmin-mediated degradation of fibrin to fibrin degradation products. Also binds to bacterial and fungal surfaces and exhibits antimicrobial activity against fungi as well as Gram-positive and Gram-negative bacteria. The polypeptide is Venom serine protease inhibitor (Apis cerana (Indian honeybee)).